The following is a 1005-amino-acid chain: Helicase-like transcription factor (1005 aa).

R27 is subject to Omega-N-methylarginine. Residues 38 to 287 mediate DNA binding; that stretch reads EFQDIIPPDD…FSEKDQPENV (250 aa). K112 is covalently cross-linked (Glycyl lysine isopeptide (Lys-Gly) (interchain with G-Cter in SUMO2)). Y195 bears the Phosphotyrosine; by JAK2 mark. K211 participates in a covalent cross-link: Glycyl lysine isopeptide (Lys-Gly) (interchain with G-Cter in SUMO2). 294-301 is an ATP binding site; that stretch reads DDMGLGKT. Over residues 325-361 the composition is skewed to basic and acidic residues; sequence KNQVKKECNSSESDKPGRKDTIKKTDGLSKEGSRYSE. The tract at residues 325-385 is disordered; the sequence is KNQVKKECNS…SELSSSQPKR (61 aa). Over residues 373-382 the composition is skewed to polar residues; the sequence is YSMSELSSSQ. 3 positions are modified to phosphoserine: S395, S396, and S398. The Helicase ATP-binding domain maps to 427–603; it reads GPSKIKEDTA…WSLLSFLKLK (177 aa). The DEGH box signature appears at 554 to 557; sequence DEGH. Position 733 is a phosphothreonine (T733). An RING-type zinc finger spans residues 757 to 798; that stretch reads CAICLDSLTVPVITHCAHVFCKPCICQCIQNEQPHAKCPLCR. Required for interaction with the RFBP isoform of ATP11B stretches follow at residues 767-772 and 791-796; these read PVITHC and HAKCPL. Residues 834–999 form the Helicase C-terminal domain; sequence ALMHALIDLR…EMKQAKINEI (166 aa). Positions 922–1005 are interaction with SP1 and SP3; sequence SRVFLMDPAW…INEIRTLIDL (84 aa).

It belongs to the SNF2/RAD54 helicase family. RAD16 subfamily. As to quaternary structure, interacts with SP1 and SP3 independently of DNA; the interaction with these transcriptional factors may be required for basal transcription of target genes. Interacts (via the RING-finger) with isoform RFBP of ATP11B. Progesterone-dependent isoform 1 interacts with EGR1; the interaction requires prior binding to DNA and represses c-Rel via a DNA looping mechanism. Interacts with GATA4. Interacts with PCNA; the interaction promotes polyubiquitination of PCNA through association with the UBE2B-RAD18 and UBE2V2-UBE2N ubiquitin ligase complexes. Interacts with RAD18, SHPRH, UBE2V2 and UBE2N. Phosphorylated on serine, threonine, and tyrosine residues. Tyr-195 phosphorylation is catalyzed by JAK2 in response to prolactin treatment. It is required for DNA binding. As to expression, isoform 1 is expressed preferentially in bladder, cervix, diaphragm, duodenum, epididymis, heart, kidney, liver, lung, ovary (granulosa cells), prostate, spleen, testis (predominantly in the Sertoli cells of the seminiferous tubules) and vagina. Isoform 2 is expressed preferentially in lactating mammary gland and uterine endometrium.

It is found in the cytoplasm. The protein resides in the nucleus. It localises to the nucleolus. The protein localises to the nucleoplasm. It catalyses the reaction S-ubiquitinyl-[E2 ubiquitin-conjugating enzyme]-L-cysteine + [acceptor protein]-L-lysine = [E2 ubiquitin-conjugating enzyme]-L-cysteine + N(6)-ubiquitinyl-[acceptor protein]-L-lysine.. It functions in the pathway protein modification; protein ubiquitination. Its function is as follows. Has both helicase and E3 ubiquitin ligase activities. Possesses intrinsic ATP-dependent nucleosome-remodeling activity. This activity may be required for transcriptional activation or repression of specific target promoters. These may include the SERPINE1, to which this protein can bind directly. Mediates repression by c-Rel through a DNA-looping mechanism. Plays a role in error-free postreplication repair (PRR) of damaged DNA and maintains genomic stability through acting as a ubiquitin ligase for 'Lys-63'-linked polyubiquitination of chromatin-bound PCNA. Transcriptional regulator that mediates the ability of prolactin to augment progesterone-dependent transcription of the SCGB1A1/uteroglobin gene through a bipartite progesterone receptor half-site/overlapping Y-box combination (-38/-26) where progesterone activation is attenuated by nuclear factor Y binding. Regulation also involves two GC-rich sequences in the proximal promoter (positions -162/+90) and a RUSH/SMARCA3 site (positions -616/-611) in the 5'-untranslated region. The polypeptide is Helicase-like transcription factor (HLTF) (Oryctolagus cuniculus (Rabbit)).